The following is a 351-amino-acid chain: Centromere-binding protein 1 (351 aa).

Residue methionine 1 is modified to N-acetylmethionine. 3 stretches are compositionally biased toward polar residues: residues 1–10, 43–52, and 65–77; these read MNSLANNNKL, LLSQESNDGN, and KGTQSQYESGLTS. Disordered stretches follow at residues 1–164, 196–233, and 327–351; these read MNSL…TQQS, KKDISMQPGRRGRKPTTLATTDEWKKQRKDSHKEVERR, and YEDMHTHKKQENERKSTRSDNPHEA. Phosphoserine; by ATM or ATR is present on serine 45. Serine 48 bears the Phosphoserine mark. At serine 84 the chain carries Phosphoserine. 2 stretches are compositionally biased toward polar residues: residues 100-124 and 138-164; these read VNYTDLIQGQEDSSDAHTSNQTNAN and TPSNEGVKPNTSLEGMTSSPMESTQQS. Threonine 138 is modified (phosphothreonine). Positions 222–270 constitute a bHLH domain; that stretch reads QRKDSHKEVERRRRENINTAINVLSDLLPVRESSKAAILACAAEYIQKL.

Binds DNA as a dimer. Associates with MET4 to form a heteromeric complex which also includes MET28.

Its subcellular location is the nucleus. It localises to the mitochondrion. The protein localises to the chromosome. The protein resides in the centromere. In terms of biological role, required for chromosome stability and methionine prototrophy. It is involved in chromosomal segregation. Binds to a highly conserved DNA sequence (5'-RTCACRTG-3'), called CDEI, found in centromeres and in several promoters. DNA-binding activity is enhanced by MET28. Required as an auxiliary factor for transcriptional activation of sulfur metabolism together with MET4 and MET28. In Saccharomyces cerevisiae (strain ATCC 204508 / S288c) (Baker's yeast), this protein is Centromere-binding protein 1 (CBF1).